The following is a 495-amino-acid chain: Aspartyl/glutamyl-tRNA(Asn/Gln) amidotransferase subunit B (495 aa).

It belongs to the GatB/GatE family. GatB subfamily. In terms of assembly, heterotrimer of A, B and C subunits.

The catalysed reaction is L-glutamyl-tRNA(Gln) + L-glutamine + ATP + H2O = L-glutaminyl-tRNA(Gln) + L-glutamate + ADP + phosphate + H(+). The enzyme catalyses L-aspartyl-tRNA(Asn) + L-glutamine + ATP + H2O = L-asparaginyl-tRNA(Asn) + L-glutamate + ADP + phosphate + 2 H(+). Allows the formation of correctly charged Asn-tRNA(Asn) or Gln-tRNA(Gln) through the transamidation of misacylated Asp-tRNA(Asn) or Glu-tRNA(Gln) in organisms which lack either or both of asparaginyl-tRNA or glutaminyl-tRNA synthetases. The reaction takes place in the presence of glutamine and ATP through an activated phospho-Asp-tRNA(Asn) or phospho-Glu-tRNA(Gln). The sequence is that of Aspartyl/glutamyl-tRNA(Asn/Gln) amidotransferase subunit B from Acinetobacter baylyi (strain ATCC 33305 / BD413 / ADP1).